The sequence spans 77 residues: Acyl carrier protein (77 aa).

In terms of domain architecture, Carrier spans 2 to 77 (SDVAERVKKI…DAIDFITANS (76 aa)). An O-(pantetheine 4'-phosphoryl)serine modification is found at S37.

This sequence belongs to the acyl carrier protein (ACP) family. Post-translationally, 4'-phosphopantetheine is transferred from CoA to a specific serine of apo-ACP by AcpS. This modification is essential for activity because fatty acids are bound in thioester linkage to the sulfhydryl of the prosthetic group.

Its subcellular location is the cytoplasm. It functions in the pathway lipid metabolism; fatty acid biosynthesis. Carrier of the growing fatty acid chain in fatty acid biosynthesis. This chain is Acyl carrier protein, found in Paramagnetospirillum magneticum (strain ATCC 700264 / AMB-1) (Magnetospirillum magneticum).